Here is a 1755-residue protein sequence, read N- to C-terminus: Transposon Ty1-NL1 Gag-Pol polyprotein (1755 aa).

Polar residues-rich tracts occupy residues 1-23 (MESQ…SVTS), 48-60 (TKAN…TPAS), 71-86 (SPQT…GPYQ), and 131-152 (PQYP…GNTF). Disordered stretches follow at residues 1–86 (MESQ…GPYQ), 131–171 (PQYP…YVRP), and 350–420 (QQES…IRGS). Positions 153–165 (TDSSSADSDMTST) are enriched in low complexity. The interval 299-401 (NNGIPINNKV…NSQSRTARAH (103 aa)) is RNA-binding. Residues 363 to 372 (NPSDEKKDSR) are compositionally biased toward basic and acidic residues. Over residues 373–412 (TYTNTTKPKSITRNSQKPNNSQSRTARAHNVSTSNNSSGP) the composition is skewed to polar residues. Catalysis depends on D461, which acts as the For protease activity; shared with dimeric partner. Positions 583–640 (NVHTSESTRKYPYPFIHRMLAHANAQTIRYSLKNNTITYFNESDVDWSSAIDYQCPDC) are integrase-type zinc finger-like. The 176-residue stretch at 660 to 835 (NSYEPFQYLH…AGLDISTLLP (176 aa)) folds into the Integrase catalytic domain. Mg(2+) contacts are provided by D671 and D736. 2 disordered regions span residues 956–1120 (SKAV…TCPK) and 1146–1172 (DSFK…SNAY). Positions 960 to 969 (SPTDSTPPST) are enriched in low complexity. Over residues 1005–1015 (STPQISDIEST) the composition is skewed to polar residues. Basic and acidic residues predominate over residues 1038–1053 (ESSHTSKSKDFRHSDS). 2 stretches are compositionally biased toward polar residues: residues 1054–1082 (YSDN…QTSE) and 1095–1106 (SIDTSSSESNSL). A Bipartite nuclear localization signal motif is present at residues 1178-1212 (KKRSLEDNETEIKVSRDTWNTKNMRSLEPPRSKKR). Residues 1338–1476 (NNYYITQLDI…DILGLEIKYQ (139 aa)) enclose the Reverse transcriptase Ty1/copia-type domain. 6 residues coordinate Mg(2+): D1346, D1427, D1428, D1610, E1652, and D1685. Residues 1610–1752 (DASYGNQPYY…IKTFKLLTNK (143 aa)) form the RNase H Ty1/copia-type domain.

The capsid protein forms a homotrimer, from which the VLPs are assembled. The protease is a homodimer, whose active site consists of two apposed aspartic acid residues. Initially, virus-like particles (VLPs) are composed of the structural unprocessed proteins Gag and Gag-Pol, and also contain the host initiator methionine tRNA (tRNA(i)-Met) which serves as a primer for minus-strand DNA synthesis, and a dimer of genomic Ty RNA. Processing of the polyproteins occurs within the particle and proceeds by an ordered pathway, called maturation. First, the protease (PR) is released by autocatalytic cleavage of the Gag-Pol polyprotein yielding capsid protein p45 and a Pol-p154 precursor protein. This cleavage is a prerequisite for subsequent processing of Pol-p154 at the remaining sites to release the mature structural and catalytic proteins. Maturation takes place prior to the RT reaction and is required to produce transposition-competent VLPs.

The protein resides in the cytoplasm. It is found in the nucleus. The catalysed reaction is DNA(n) + a 2'-deoxyribonucleoside 5'-triphosphate = DNA(n+1) + diphosphate. It catalyses the reaction Endonucleolytic cleavage to 5'-phosphomonoester.. Its function is as follows. Capsid protein (CA) is the structural component of the virus-like particle (VLP), forming the shell that encapsulates the retrotransposons dimeric RNA genome. The particles are assembled from trimer-clustered units and there are holes in the capsid shells that allow for the diffusion of macromolecules. CA also has nucleocapsid-like chaperone activity, promoting primer tRNA(i)-Met annealing to the multipartite primer-binding site (PBS), dimerization of Ty1 RNA and initiation of reverse transcription. Functionally, the aspartyl protease (PR) mediates the proteolytic cleavages of the Gag and Gag-Pol polyproteins after assembly of the VLP. In terms of biological role, reverse transcriptase/ribonuclease H (RT) is a multifunctional enzyme that catalyzes the conversion of the retro-elements RNA genome into dsDNA within the VLP. The enzyme displays a DNA polymerase activity that can copy either DNA or RNA templates, and a ribonuclease H (RNase H) activity that cleaves the RNA strand of RNA-DNA heteroduplexes during plus-strand synthesis and hydrolyzes RNA primers. The conversion leads to a linear dsDNA copy of the retrotransposon that includes long terminal repeats (LTRs) at both ends. Integrase (IN) targets the VLP to the nucleus, where a subparticle preintegration complex (PIC) containing at least integrase and the newly synthesized dsDNA copy of the retrotransposon must transit the nuclear membrane. Once in the nucleus, integrase performs the integration of the dsDNA into the host genome. The chain is Transposon Ty1-NL1 Gag-Pol polyprotein (TY1B-NL1) from Saccharomyces cerevisiae (strain ATCC 204508 / S288c) (Baker's yeast).